We begin with the raw amino-acid sequence, 120 residues long: Large ribosomal subunit protein uL18 (120 aa).

It belongs to the universal ribosomal protein uL18 family. As to quaternary structure, part of the 50S ribosomal subunit; part of the 5S rRNA/L5/L18/L25 subcomplex. Contacts the 5S and 23S rRNAs.

This is one of the proteins that bind and probably mediate the attachment of the 5S RNA into the large ribosomal subunit, where it forms part of the central protuberance. This Bacillus pumilus (strain SAFR-032) protein is Large ribosomal subunit protein uL18.